The primary structure comprises 2383 residues: Highly reducing polyketide synthase SAT13 (2383 aa).

The Ketosynthase family 3 (KS3) domain maps to 6–433 (PVPLAIVGIA…GTNAHAVLER (428 aa)). Residues Cys-180, His-315, and His-355 each act as for beta-ketoacyl synthase activity in the active site. The interval 536 to 828 (FIFTGQGAQW…IGPHSALAGP (293 aa)) is malonyl-CoA:ACP transacylase (MAT) domain. Ser-626 serves as the catalytic For malonyltransferase activity. An N-terminal hotdog fold region spans residues 922 to 1062 (HDLLGLRMTE…GNIVVVFKTS (141 aa)). The interval 922–1239 (HDLLGLRMTE…GMELRSFVAR (318 aa)) is dehydratase (DH) domain. Residues 922–1242 (HDLLGLRMTE…LRSFVARDSN (321 aa)) enclose the PKS/mFAS DH domain. The active-site Proton acceptor; for dehydratase activity is His-954. The segment at 1087-1242 (GKLTHAGQLY…LRSFVARDSN (156 aa)) is C-terminal hotdog fold. Asp-1152 functions as the Proton donor; for dehydratase activity in the catalytic mechanism. Positions 1669 to 1977 (DGQNRLVFVE…KQGSMKKCVL (309 aa)) are enoylreductase (ER) domain. A catalytic ketoreductase (KRc) domain region spans residues 2001–2184 (ATYVVAGGLG…MSLNIGGIKD (184 aa)). Residues 2287–2364 (EISEFVARSI…DLAQKVVSRS (78 aa)) enclose the Carrier domain. Ser-2324 is modified (O-(pantetheine 4'-phosphoryl)serine).

It functions in the pathway mycotoxin biosynthesis. Highly reducing polyketide synthase; part of the satratoxin SC2 cluster involved in the biosynthesis of satratoxins, trichothecene mycotoxins that are associated with human food poisonings. Satratoxins are suggested to be made by products of multiple gene clusters (SC1, SC2 and SC3) that encode 21 proteins in all, including polyketide synthases, acetyltransferases, and other enzymes expected to modify the trichothecene skeleton. SC1 encodes 10 proteins, SAT1 to SAT10. The largest are SAT8, which encodes a putative polyketide synthase (PKS) with a conventional non-reducing architecture, and SAT10, a putative protein containing four ankyrin repeats and thus may be involved in protein scaffolding. The putative short-chain reductase SAT3 may assist the PKS in some capacity. SAT6 contains a secretory lipase domain and acts probably as a trichothecene esterase. SAT5 encodes a putative acetyltransferase, and so, with SAT6, may affect endogenous protection from toxicity. The probable transcription factor SAT9 may regulate the expression of the SC1 cluster. SC2 encodes proteins SAT11 to SAT16, the largest of which encodes the putative reducing PKS SAT13. SAT11 is a cytochrome P450 monooxygenase, while SAT14 and SAT16 are probable acetyltransferases. The SC2 cluster may be regulated by the transcription factor SAT15. SC3 is a small cluster that encodes 5 proteins, SAT17 to SAT21. SAT21 is a putative MFS-type transporter which may have a role in exporting secondary metabolites. The four other proteins putatively encoded in SC3 include the taurine hydroxylase-like protein SAT17, the O-methyltransferase SAT18, the acetyltransferase SAT19, and the Cys6-type zinc finger SAT20, the latter being probably involved in regulation of SC3 expression. This Stachybotrys chartarum (strain CBS 109288 / IBT 7711) (Toxic black mold) protein is Highly reducing polyketide synthase SAT13.